A 134-amino-acid chain; its full sequence is RxLR effector protein 4 (134 aa).

Positions 1 to 22 (MRSLFYIAVAVAVFARSSAVAA) are cleaved as a signal peptide. Residues 43-65 (AMASSDSRKRFLRATDPEDGDLQ) are disordered. Over residues 48-58 (DSRKRFLRATD) the composition is skewed to basic and acidic residues. The RxLR-dEER motif lies at 52-71 (RFLRATDPEDGDLQADDEER).

It belongs to the RxLR effector family.

It is found in the secreted. Its function is as follows. Effector that enhances plant susceptibility to P.parasitica in Nicotiana benthamiana and Arabidopsis thaliana. Triggers non-specific cell death in a variety of plants, including tobacco, tomato, potato and A.thaliana. E4-induced cell death is dependent on HSP90, NPK and SGT1, suggesting that PpE4 is recognized by the plant immune system. The protein is RxLR effector protein 4 of Phytophthora nicotianae (strain INRA-310) (Phytophthora parasitica).